We begin with the raw amino-acid sequence, 465 residues long: Botryococcus squalene synthase (465 aa).

Positions 48 and 73 each coordinate NADP(+). Positions 76, 79, and 80 each coordinate Mg(2+). NADP(+)-binding residues include Arg-215, Lys-315, and Arg-317. 2 helical membrane-spanning segments follow: residues Ala-395 to Gly-415 and Ile-429 to Leu-449.

This sequence belongs to the phytoene/squalene synthase family.

The protein resides in the membrane. It carries out the reaction presqualene diphosphate + NADPH + H(+) = squalene + diphosphate + NADP(+). In terms of biological role, produces squalene when coexpressed with SSL-1 and bisfarnesyl ether and a very small amount of squalene when incubated alone in the presence of NADPH. This is Botryococcus squalene synthase (SSL-2) from Botryococcus braunii (Green alga).